The sequence spans 173 residues: Crossover junction endodeoxyribonuclease RuvC (173 aa).

Active-site residues include aspartate 8, glutamate 69, and aspartate 141. Residues aspartate 8, glutamate 69, and aspartate 141 each coordinate Mg(2+).

Belongs to the RuvC family. As to quaternary structure, homodimer which binds Holliday junction (HJ) DNA. The HJ becomes 2-fold symmetrical on binding to RuvC with unstacked arms; it has a different conformation from HJ DNA in complex with RuvA. In the full resolvosome a probable DNA-RuvA(4)-RuvB(12)-RuvC(2) complex forms which resolves the HJ. Mg(2+) is required as a cofactor.

The protein localises to the cytoplasm. It catalyses the reaction Endonucleolytic cleavage at a junction such as a reciprocal single-stranded crossover between two homologous DNA duplexes (Holliday junction).. The RuvA-RuvB-RuvC complex processes Holliday junction (HJ) DNA during genetic recombination and DNA repair. Endonuclease that resolves HJ intermediates. Cleaves cruciform DNA by making single-stranded nicks across the HJ at symmetrical positions within the homologous arms, yielding a 5'-phosphate and a 3'-hydroxyl group; requires a central core of homology in the junction. The consensus cleavage sequence is 5'-(A/T)TT(C/G)-3'. Cleavage occurs on the 3'-side of the TT dinucleotide at the point of strand exchange. HJ branch migration catalyzed by RuvA-RuvB allows RuvC to scan DNA until it finds its consensus sequence, where it cleaves and resolves the cruciform DNA. In Xylella fastidiosa (strain Temecula1 / ATCC 700964), this protein is Crossover junction endodeoxyribonuclease RuvC.